The chain runs to 328 residues: Ribosomal protein L11 methyltransferase (328 aa).

4 residues coordinate S-adenosyl-L-methionine: Thr-158, Gly-180, Asp-202, and Asn-246.

It belongs to the methyltransferase superfamily. PrmA family.

It is found in the cytoplasm. It carries out the reaction L-lysyl-[protein] + 3 S-adenosyl-L-methionine = N(6),N(6),N(6)-trimethyl-L-lysyl-[protein] + 3 S-adenosyl-L-homocysteine + 3 H(+). Functionally, methylates ribosomal protein L11. The chain is Ribosomal protein L11 methyltransferase from Polynucleobacter necessarius subsp. necessarius (strain STIR1).